The primary structure comprises 350 residues: Guanine nucleotide-binding protein G(t) subunit alpha-1 (350 aa).

Residues 1 to 21 (MGAGASAEEKHSRELEKKLKE) form a disordered region. A lipid anchor (N-myristoyl glycine) is attached at glycine 2. The span at 7 to 21 (AEEKHSRELEKKLKE) shows a compositional bias: basic and acidic residues. One can recognise a G-alpha domain in the interval 28–350 (RTVKLLLLGA…KENLKDCGLF (323 aa)). A G1 motif region spans residues 31–44 (KLLLLGAGESGKST). 36 to 43 (GAGESGKS) provides a ligand contact to GTP. Serine 43 contacts Mg(2+). Position 142 is a phosphotyrosine (tyrosine 142). GTP contacts are provided by residues aspartate 146, 171 to 177 (LRSRVKT), glycine 199, 265 to 268 (NKKD), and alanine 322. Residues 169–177 (DVLRSRVKT) form a G2 motif region. Threonine 177 contributes to the Mg(2+) binding site. The G3 motif stretch occupies residues 192-201 (FRMFDVGGQR). Positions 261–268 (VLFLNKKD) are G4 motif. A G5 motif region spans residues 320–325 (TCATDT). Residues 340–350 (IKENLKDCGLF) are interaction with RHO.

Heterotrimeric G proteins are composed of 3 subunits alpha, beta and gamma. The alpha chain contains the guanine nucleotide binding site. Interacts with RHO. Interacts with RGS9 and PDE6G. Interacts (when myristoylated) with UNC119; interaction is required for localization in sensory neurons. Rod.

It localises to the cell projection. The protein resides in the cilium. It is found in the photoreceptor outer segment. Its subcellular location is the membrane. The protein localises to the photoreceptor inner segment. Functionally, functions as a signal transducer for the rod photoreceptor RHO. Required for normal RHO-mediated light perception by the retina. Guanine nucleotide-binding proteins (G proteins) function as transducers downstream of G protein-coupled receptors (GPCRs), such as the photoreceptor RHO. The alpha chain contains the guanine nucleotide binding site and alternates between an active, GTP-bound state and an inactive, GDP-bound state. Activated RHO promotes GDP release and GTP binding. Signaling is mediated via downstream effector proteins, such as cGMP-phosphodiesterase. This is Guanine nucleotide-binding protein G(t) subunit alpha-1 (GNAT1) from Bos taurus (Bovine).